The sequence spans 447 residues: METRETKPVIFLFPFPLQGHLNPMFQLANIFFNRGFSITVIHTEFNSPNSSNFPHFTFVSIPDSLSEPESYPDVIEILHDLNSKCVAPFGDCLKKLISEEPTAACVIVDALWYFTHDLTEKFNFPRIVLRTVNLSAFVAFSKFHVLREKGYLSLQETKADSPVPELPYLRMKDLPWFQTEDPRSGDKLQIGVMKSLKSSSGIIFNAIEDLETDQLDEARIEFPVPLFCIGPFHRYVSASSSSLLAHDMTCLSWLDKQATNSVIYASLGSIASIDESEFLEIAWGLRNSNQPFLWVVRPGLIHGKEWIEILPKGFIENLEGRGKIVKWAPQPEVLAHRATGGFLTHCGWNSTLEGICEAIPMICRPSFGDQRVNARYINDVWKIGLHLENKVERLVIENAVRTLMTSSEGEEIRKRIMPMKETVEQCLKLGGSSFRNLENLIAYILSF.

UDP-alpha-D-glucose contacts are provided by residues Ser269, 327 to 328 (WA), 345 to 353 (HCGWNSTLE), and 367 to 370 (FGDQ).

This sequence belongs to the UDP-glycosyltransferase family. In terms of tissue distribution, expressed in roots, leaves, hydathodes, sepals and style.

Its function is as follows. Glycosylates the amino acid-related molecules isoleucic acid (2-hydroxy-3-methylpentanoic acid) and valic acid (2-hydroxy-3-methylbutyric acid). Acts as a negative regulator of salicylic acid (SA)-dependent plant defense in the absence of pathogens and promotes the jasmonate (JA) response. Negatively influences the onset of senescence. The protein is UDP-glycosyltransferase 76B1 of Arabidopsis thaliana (Mouse-ear cress).